The chain runs to 233 residues: Putative nosiheptide resistance regulatory protein (233 aa).

Positions 93-112 (RKAARQAADYSRPMIEQAVA) form a DNA-binding region, H-T-H motif. The interval 190-233 (PPEATEVPESGRLTSVDGSAEAVLDPEVQAKEAAEEAAKRDDQA) is disordered. The segment covering 217-233 (VQAKEAAEEAAKRDDQA) has biased composition (basic and acidic residues).

In terms of biological role, seems to be involved in the regulation of nhs expression. In Streptomyces actuosus, this protein is Putative nosiheptide resistance regulatory protein.